A 152-amino-acid polypeptide reads, in one-letter code: SMN complex subunit smn1 (152 aa).

Positions 26–51 are interacts with yip11/gem2; sequence KKYHSIEAKGGVSDPDSRLDGEKLIS. Positions 88 to 110 are disordered; the sequence is DNKGLSDEKPETRAAETHQEFME. The span at 91 to 108 shows a compositional bias: basic and acidic residues; it reads GLSDEKPETRAAETHQEF. A may interact with gem8 region spans residues 130–152; the sequence is SWYYAGYYTGLAEGLAKSEQRKD.

This sequence belongs to the SMN family. Homooligomer; may form homodimers and homotetramers. Part of the core SMN complex at least composed of smn1, yip11/gem2, gem6, gem7 and gem8. Part of the SMN-Sm complex. Interacts with yip11/gem2; the interaction is direct. Interacts with gem8; the interaction is direct. Interacts with proteins of the Sm complex, including smn1, smb1, smd1, smd2 and smd3.

It is found in the nucleus. Functionally, the SMN complex catalyzes the assembly of small nuclear ribonucleoproteins (snRNPs), the building blocks of the spliceosome, and thereby plays an important role in the splicing of cellular pre-mRNAs. Most spliceosomal snRNPs contain a common set of Sm proteins smb1, smd1, smd2, smd3, sme1, smf1 and smg1 that assemble in a heptameric protein ring on the Sm site of the small nuclear RNA to form the core snRNP (Sm core). In the cytosol, the Sm proteins smd1, smd2, sme1, smf1 and smg1 (5Sm) are trapped in an inactive 6S pICln-Sm complex by the chaperone saf5 that controls the assembly of the core snRNP. To assemble core snRNPs, the SMN complex accepts the trapped 5Sm proteins from saf5 forming an intermediate. Binding of snRNA inside 5Sm triggers eviction of the SMN complex, thereby allowing binding of smd3 and smb1 to complete assembly of the core snRNP. Within the SMN complex, smn1 acts as a structural backbone and together with yip11/gem2 it gathers the Sm complex subunits. The protein is SMN complex subunit smn1 of Schizosaccharomyces pombe (strain 972 / ATCC 24843) (Fission yeast).